Consider the following 121-residue polypeptide: Acidic phospholipase A2 PLA-2 (121 aa).

Cystine bridges form between Cys-26–Cys-115, Cys-28–Cys-44, Cys-43–Cys-95, Cys-49–Cys-121, Cys-50–Cys-88, Cys-57–Cys-81, and Cys-75–Cys-86. Residues Tyr-27, Gly-29, and Gly-31 each contribute to the Ca(2+) site. The active site involves His-47. Asp-48 provides a ligand contact to Ca(2+). Asp-89 is a catalytic residue.

This sequence belongs to the phospholipase A2 family. Group II subfamily. D49 sub-subfamily. Ca(2+) is required as a cofactor. Expressed by the venom gland.

The protein localises to the secreted. It carries out the reaction a 1,2-diacyl-sn-glycero-3-phosphocholine + H2O = a 1-acyl-sn-glycero-3-phosphocholine + a fatty acid + H(+). PLA2 catalyzes the calcium-dependent hydrolysis of the 2-acyl groups in 3-sn-phosphoglycerides. The sequence is that of Acidic phospholipase A2 PLA-2 from Eristicophis macmahoni (Leaf-nosed viper).